Here is a 58-residue protein sequence, read N- to C-terminus: Large ribosomal subunit protein eL37 (58 aa).

Over residues 1–17 (MTGAGTPSQGKKNTTTH) the composition is skewed to polar residues. The tract at residues 1 to 26 (MTGAGTPSQGKKNTTTHTKCRRCGEK) is disordered. Residues Cys20, Cys23, Cys35, and Cys38 each coordinate Zn(2+). The C4-type zinc-finger motif lies at 20 to 38 (CRRCGEKSYHTKKKVCSSC).

It belongs to the eukaryotic ribosomal protein eL37 family. Zn(2+) serves as cofactor.

In terms of biological role, binds to the 23S rRNA. The sequence is that of Large ribosomal subunit protein eL37 from Halobacterium salinarum (strain ATCC 29341 / DSM 671 / R1).